The following is a 92-amino-acid chain: Phospholemman (92 aa).

A signal peptide spans 1–20; sequence MASPGHILIVCVCLLSMASA. Residues 21–35 lie on the Extracellular side of the membrane; sequence EAPQEPDPFTYDYHT. Residues 36–56 traverse the membrane as a helical segment; it reads LRIGGLTIAGILFILGILIIL. The Cytoplasmic segment spans residues 57–92; it reads SKRCRCKFNQQQRTGEPDEEEGTFRSSIRRLSTRRR. The S-palmitoyl cysteine moiety is linked to residue Cys60. An S-glutathionyl cysteine; alternate modification is found at Cys62. A lipid anchor (S-palmitoyl cysteine; alternate) is attached at Cys62. The segment at 66-92 is disordered; it reads QQQRTGEPDEEEGTFRSSIRRLSTRRR. Phosphothreonine is present on Thr79. Ser82 is modified (phosphoserine). Residue Ser83 is modified to Phosphoserine; by PKA and PKC. Residues 83–92 show a composition bias toward basic residues; the sequence is SIRRLSTRRR. Ser88 is subject to Phosphoserine; by PKA. At Thr89 the chain carries Phosphothreonine; by PKC.

It belongs to the FXYD family. Homotetramer. Monomer. Regulatory subunit of the sodium/potassium-transporting ATPase (NKA) which is composed of a catalytic alpha subunit, a non-catalytic beta subunit and an additional regulatory subunit. The monomeric form associates with NKA while the oligomeric form does not. Interacts with the catalytic alpha-1 subunit ATP1A1. Also interacts with the catalytic alpha-2 and alpha-3 subunits ATP1A2 and ATP1A3. Very little interaction with ATP1A1, ATP1A2 or ATP1A3 when phosphorylated at Ser-83. Interacts with the non-catalytic beta-1 subunit ATP1B1. Oxidative stress decreases interaction with ATP1A1 but increases interaction with ATP1B1. Major plasma membrane substrate for cAMP-dependent protein kinase (PKA) and protein kinase C (PKC) in several different tissues. Phosphorylated in response to insulin and adrenergic stimulation. Phosphorylation at Ser-88 stimulates sodium/potassium-transporting ATPase activity while the unphosphorylated form inhibits sodium/potassium-transporting ATPase activity. Phosphorylation increases tetramerization, decreases binding to ATP1A1 and reduces inhibition of ATP1A1 activity. Phosphorylation at Ser-83 leads to greatly reduced interaction with ATP1A1, ATP1A2 and ATP1A3. May be phosphorylated by DMPK. Post-translationally, palmitoylation increases half-life and stability and is enhanced upon phosphorylation at Ser-88 by PKA. In adult brain, highest levels are found in the cerebellum and in the lateral, third and fourth ventricles of the choroid plexus (at protein level). Also detected in cells of a portion of the ependymal lining of the lateral ventricle on its rostral surface posterior to the caudate putamen (at protein level). Expressed in a subset of neurons which secrete gonadotropin-releasing hormone.

Its subcellular location is the cell membrane. It localises to the sarcolemma. It is found in the apical cell membrane. The protein resides in the membrane. The protein localises to the caveola. Its subcellular location is the T-tubule. Functionally, associates with and regulates the activity of the sodium/potassium-transporting ATPase (NKA) which transports Na(+) out of the cell and K(+) into the cell. Inhibits NKA activity in its unphosphorylated state and stimulates activity when phosphorylated. Reduces glutathionylation of the NKA beta-1 subunit ATP1B1, thus reversing glutathionylation-mediated inhibition of ATP1B1. Contributes to female sexual development by maintaining the excitability of neurons which secrete gonadotropin-releasing hormone. This is Phospholemman from Rattus norvegicus (Rat).